A 530-amino-acid polypeptide reads, in one-letter code: UPF0422 protein lpp3030 (530 aa).

An N-terminal signal peptide occupies residues 1–19 (MKFKKIILALACLSSPLYA). A coiled-coil region spans residues 20 to 66 (DQDQQLKSEIQRLQHQAEDLQAQLNRLQKQLANHKSSQQKHEQQAAA). The segment at 50-81 (LANHKSSQQKHEQQAAAKPAEPKSKPTTKSGA) is disordered. Residues 63 to 79 (QAAAKPAEPKSKPTTKS) show a composition bias toward low complexity.

This sequence belongs to the UPF0422 family.

This Legionella pneumophila (strain Paris) protein is UPF0422 protein lpp3030.